Reading from the N-terminus, the 53-residue chain is Small, acid-soluble spore protein K (53 aa).

The disordered stretch occupies residues 1–53 (MRNKEHNFPNQNNNKFEGEPRAKSEYASKRADGTTNTHPQERMRASGERSDFF). 2 stretches are compositionally biased toward basic and acidic residues: residues 16–32 (FEGE…KRAD) and 39–53 (PQER…SDFF).

Belongs to the SspK family.

It localises to the spore core. The polypeptide is Small, acid-soluble spore protein K (Geobacillus thermodenitrificans (strain NG80-2)).